The following is a 258-amino-acid chain: ProSAAS (258 aa).

An N-terminal signal peptide occupies residues methionine 1–serine 33. Positions alanine 34–proline 213 are proSAAS(1-180). 3 disordered regions span residues proline 156 to valine 188, serine 204 to proline 230, and arginine 239 to proline 258. Over residues aspartate 177–valine 188 the composition is skewed to acidic residues. Over residues serine 204–proline 213 the composition is skewed to low complexity. Positions serine 219–proline 258 are C-terminal inhibitory domain; interacts with PCSK1. The short motif at leucine 237–arginine 242 is the Sufficient for inhibition of PCSK1 element.

As to quaternary structure, interacts via the C-terminal inhibitory domain with PCSK1 66 kDa form. Proteolytically cleaved in the Golgi. Little SAAS, PEN, PEN-20 and Big LEN are the major processed peptides in proSAAS-overexpressing AtT-20 pituitary corticotropic cell line. In terms of tissue distribution, expressed in brain (mostly hypothalamus and pituitary) and gut. Expressed in trigeminal ganglia and neuroendocrine cell lines. As to expression, expressed in pancreas, spinal cord and brain (most abundant in striatum, hippocampus, pons and medulla, and cortex) (at protein level).

It is found in the secreted. The protein resides in the golgi apparatus. Its subcellular location is the trans-Golgi network. Functionally, may function in the control of the neuroendocrine secretory pathway. Proposed be a specific endogenous inhibitor of PCSK1. ProSAAS and Big PEN-LEN, both containing the C-terminal inhibitory domain, but not the processed peptides reduce PCSK1 activity in the endoplasmic reticulum and Golgi. It reduces the activity of the 87 kDa form but not the autocatalytically derived 66 kDa form of PCSK1. Subsequent processing of proSAAS may eliminate the inhibition. Slows down convertase-mediated processing of proopiomelanocortin and proenkephalin. May control the intracellular timing of PCSK1 rather than its total level of activity. Its function is as follows. Endogenous ligand for GPR171. Neuropeptide involved in the regulation of feeding. Endogenous ligand for GPR171. Neuropeptide involved in the regulation of feeding. The sequence is that of ProSAAS (Pcsk1n) from Mus musculus (Mouse).